We begin with the raw amino-acid sequence, 178 residues long: Large ribosomal subunit protein eL20 (178 aa).

It belongs to the eukaryotic ribosomal protein eL20 family.

This Oryza sativa subsp. japonica (Rice) protein is Large ribosomal subunit protein eL20 (RPL18A).